A 99-amino-acid chain; its full sequence is Antitoxin VapB47 (99 aa).

It belongs to the phD/YefM antitoxin family.

Functionally, antitoxin component of a type II toxin-antitoxin (TA) system. The sequence is that of Antitoxin VapB47 (vapB47) from Mycobacterium tuberculosis (strain CDC 1551 / Oshkosh).